The chain runs to 239 residues: tRNA (guanine-N(7)-)-methyltransferase (239 aa).

Glu-69, Glu-94, Asp-121, and Asp-144 together coordinate S-adenosyl-L-methionine. Asp-144 is an active-site residue. Substrate contacts are provided by residues Lys-148, Asp-180, and 217–220 (TNFE).

The protein belongs to the class I-like SAM-binding methyltransferase superfamily. TrmB family. As to quaternary structure, monomer.

It catalyses the reaction guanosine(46) in tRNA + S-adenosyl-L-methionine = N(7)-methylguanosine(46) in tRNA + S-adenosyl-L-homocysteine. It functions in the pathway tRNA modification; N(7)-methylguanine-tRNA biosynthesis. In terms of biological role, catalyzes the formation of N(7)-methylguanine at position 46 (m7G46) in tRNA. This Buchnera aphidicola subsp. Schizaphis graminum (strain Sg) protein is tRNA (guanine-N(7)-)-methyltransferase.